Consider the following 417-residue polypeptide: L-rhamnose isomerase (417 aa).

Positions 260, 292, and 294 each coordinate Mn(2+).

The protein belongs to the rhamnose isomerase family. Mn(2+) serves as cofactor.

The protein localises to the cytoplasm. The catalysed reaction is L-rhamnopyranose = L-rhamnulose. The protein operates within carbohydrate degradation; L-rhamnose degradation; glycerone phosphate from L-rhamnose: step 1/3. Functionally, catalyzes the interconversion of L-rhamnose and L-rhamnulose. The polypeptide is L-rhamnose isomerase (Mannheimia succiniciproducens (strain KCTC 0769BP / MBEL55E)).